The following is a 252-amino-acid chain: Fluoroquinolones export permease protein MT2760 (252 aa).

A run of 6 helical transmembrane segments spans residues 31-51 (VMLV…TPLF), 69-89 (LILT…LAAF), 119-139 (ATVM…SGIL), 148-168 (IPIG…ILAV), 176-196 (LAMV…PWFI), and 224-244 (TWWP…WVLF).

As to quaternary structure, the complex is composed of 2 ATP-binding proteins and 2 transmembrane proteins.

Its subcellular location is the cell membrane. Functionally, part of the ABC transporter complex involved in fluoroquinolones export. Probably responsible for the translocation of the substrate across the membrane. This Mycobacterium tuberculosis (strain CDC 1551 / Oshkosh) protein is Fluoroquinolones export permease protein MT2760.